The sequence spans 440 residues: Protein arginine N-methyltransferase 2 (440 aa).

Residues 147 to 194 are disordered; the sequence is LSSGSEDGDEEMEVQQDDDEEAPQLVSTEDVEPTVEEPKFIPPDAKEK. A compositionally biased stretch (acidic residues) spans 152–168; the sequence is EDGDEEMEVQQDDDEEA. Over residues 182–194 the composition is skewed to basic and acidic residues; the sequence is EEPKFIPPDAKEK. Residues 192 to 440 enclose the RMT2 domain; that stretch reads KEKQVTSEEY…RYAVGTSNRL (249 aa). Residues Y201, M230, 252 to 257, 273 to 275, 310 to 311, and D330 each bind S-adenosyl-L-methionine; these read FGMGIV, EAH, and WQ.

This sequence belongs to the class I-like SAM-binding methyltransferase superfamily. RMT2 methyltransferase family. As to quaternary structure, monomer.

It is found in the cytoplasm. Its subcellular location is the nucleus. Its function is as follows. S-adenosyl-L-methionine-dependent protein-arginine N-methyltransferase that methylates the delta-nitrogen atom of arginine residues to form N5-methylarginine (type IV) in target proteins. Monomethylates ribosomal protein L12. The polypeptide is Protein arginine N-methyltransferase 2 (Gibberella zeae (strain ATCC MYA-4620 / CBS 123657 / FGSC 9075 / NRRL 31084 / PH-1) (Wheat head blight fungus)).